The following is a 789-amino-acid chain: Aryl hydrocarbon receptor nuclear translocator (789 aa).

The span at 1–14 (MAATTANPEMTSDV) shows a compositional bias: polar residues. The segment at 1-97 (MAATTANPEM…RLARENHSEI (97 aa)) is disordered. N-acetylalanine is present on alanine 2. Over residues 26 to 35 (SGPGIQGGGA) the composition is skewed to gly residues. Lysine 58 is covalently cross-linked (Glycyl lysine isopeptide (Lys-Gly) (interchain with G-Cter in SUMO2)). Residues 60 to 97 (LRCDDDQMSNDKERFARSDDEQSSADKERLARENHSEI) show a composition bias toward basic and acidic residues. The residue at position 77 (serine 77) is a Phosphoserine. Residues 88–128 (RLARENHSEIERRRRNKMTAYITELSDMVPTCSALARKPDK) form a DNA-binding region. The bHLH domain occupies 89-142 (LARENHSEIERRRRNKMTAYITELSDMVPTCSALARKPDKLTILRMAVSHMKSL). Positions 112–168 (LSDMVPTCSALARKPDKLTILRMAVSHMKSLRGTGNTSTDGSYKPSFLTDQELKHLI) are required for heterodimer formation with HIF1A. Positions 112–264 (LSDMVPTCSA…MCMGSRRSFI (153 aa)) are required for heterodimer formation with EPAS1. 2 consecutive PAS domains span residues 161 to 235 (DQEL…LTGR) and 349 to 419 (PNCT…VKLK). The mediates the transcription activity and dimerization of the AHR:ARNT complex stretch occupies residues 167–171 (LILEA). One can recognise a PAC domain in the interval 424 to 467 (SVMFRFRSKNQEWLWMRTSSFTFQNPYSDEIEYIICTNTNVKNS). Residues 465–481 (KNSSQEPRPTLSNTIQR) show a composition bias toward polar residues. Disordered regions lie at residues 465-492 (KNSSQEPRPTLSNTIQRPQLGPTANLPL) and 672-789 (TPSS…PFSE). Positions 672-696 (TPSSFSSMSLPGAPTASPGAAAYPS) are enriched in low complexity. Over residues 708–719 (TGQTAGQFQTRT) the composition is skewed to polar residues. Composition is skewed to low complexity over residues 723-733 (VGVWPQWQGQQ) and 743-756 (QHVQQPPAQQPGQP).

As to quaternary structure, monomer. Homodimer only upon binding to a DNA. Efficient DNA binding requires dimerization with another bHLH protein. Interacts with TACC3. Interacts with HIF1A, EPAS1, NPAS1 and NPAS3; forms a heterodimer that binds core DNA sequence 5'-TACGTG-3' within the hypoxia response element (HRE) of target gene promoters. Forms a heterodimer with AHRR, as well as with other bHLH proteins. Interacts with NOCA7. Interacts with TACC3. Interacts with AHR; the heterodimer ARNT:AHR binds to core DNA sequence 5'-TGCGTG-3' within the dioxin response element (DRE) of target gene promoters and activates their transcription. Interacts with SIM1 and NPAS4.

Its subcellular location is the nucleus. In terms of biological role, required for activity of the AHR. Upon ligand binding, AHR translocates into the nucleus, where it heterodimerizes with ARNT and induces transcription by binding to xenobiotic response elements (XRE). Not required for the ligand-binding subunit to translocate from the cytosol to the nucleus after ligand binding. The complex initiates transcription of genes involved in the regulation of a variety of biological processes, including angiogenesis, hematopoiesis, drug and lipid metabolism, cell motility and immune modulation. The heterodimer binds to core DNA sequence 5'-TACGTG-3' within the hypoxia response element (HRE) of target gene promoters and functions as a transcriptional regulator of the adaptive response to hypoxia. The heterodimer ARNT:AHR binds to core DNA sequence 5'-TGCGTG-3' within the dioxin response element (DRE) of target gene promoters and activates their transcription. This Homo sapiens (Human) protein is Aryl hydrocarbon receptor nuclear translocator.